Reading from the N-terminus, the 227-residue chain is Cytochrome c oxidase subunit 2 (227 aa).

The Mitochondrial intermembrane segment spans residues 1 to 14 (MAYPLQLGFQDASS). The chain crosses the membrane as a helical span at residues 15-45 (PIMEELLHFHDHTLMIVFLISSLVLYIISLM). Over 46-59 (LTTKLTHTSTMDAQ) the chain is Mitochondrial matrix. Residues 60–87 (EVETIWTILPAIILILIALPSLRILYMM) traverse the membrane as a helical segment. The Mitochondrial intermembrane segment spans residues 88–227 (DEINNPSLTV…HFENWTTTML (140 aa)). Residues His161, Cys196, Glu198, Cys200, His204, and Met207 each coordinate Cu cation. Residue Glu198 coordinates Mg(2+).

The protein belongs to the cytochrome c oxidase subunit 2 family. In terms of assembly, component of the cytochrome c oxidase (complex IV, CIV), a multisubunit enzyme composed of 14 subunits. The complex is composed of a catalytic core of 3 subunits MT-CO1, MT-CO2 and MT-CO3, encoded in the mitochondrial DNA, and 11 supernumerary subunits COX4I, COX5A, COX5B, COX6A, COX6B, COX6C, COX7A, COX7B, COX7C, COX8 and NDUFA4, which are encoded in the nuclear genome. The complex exists as a monomer or a dimer and forms supercomplexes (SCs) in the inner mitochondrial membrane with NADH-ubiquinone oxidoreductase (complex I, CI) and ubiquinol-cytochrome c oxidoreductase (cytochrome b-c1 complex, complex III, CIII), resulting in different assemblies (supercomplex SCI(1)III(2)IV(1) and megacomplex MCI(2)III(2)IV(2)). Found in a complex with TMEM177, COA6, COX18, COX20, SCO1 and SCO2. Interacts with TMEM177 in a COX20-dependent manner. Interacts with COX20. Interacts with COX16. It depends on Cu cation as a cofactor.

It is found in the mitochondrion inner membrane. It catalyses the reaction 4 Fe(II)-[cytochrome c] + O2 + 8 H(+)(in) = 4 Fe(III)-[cytochrome c] + 2 H2O + 4 H(+)(out). Component of the cytochrome c oxidase, the last enzyme in the mitochondrial electron transport chain which drives oxidative phosphorylation. The respiratory chain contains 3 multisubunit complexes succinate dehydrogenase (complex II, CII), ubiquinol-cytochrome c oxidoreductase (cytochrome b-c1 complex, complex III, CIII) and cytochrome c oxidase (complex IV, CIV), that cooperate to transfer electrons derived from NADH and succinate to molecular oxygen, creating an electrochemical gradient over the inner membrane that drives transmembrane transport and the ATP synthase. Cytochrome c oxidase is the component of the respiratory chain that catalyzes the reduction of oxygen to water. Electrons originating from reduced cytochrome c in the intermembrane space (IMS) are transferred via the dinuclear copper A center (CU(A)) of subunit 2 and heme A of subunit 1 to the active site in subunit 1, a binuclear center (BNC) formed by heme A3 and copper B (CU(B)). The BNC reduces molecular oxygen to 2 water molecules using 4 electrons from cytochrome c in the IMS and 4 protons from the mitochondrial matrix. This is Cytochrome c oxidase subunit 2 (MT-CO2) from Tupaia glis (Common tree shrew).